We begin with the raw amino-acid sequence, 462 residues long: tRNA(Ile)-lysidine synthase (462 aa).

26 to 31 (SGGVDS) contacts ATP.

Belongs to the tRNA(Ile)-lysidine synthase family.

Its subcellular location is the cytoplasm. The enzyme catalyses cytidine(34) in tRNA(Ile2) + L-lysine + ATP = lysidine(34) in tRNA(Ile2) + AMP + diphosphate + H(+). Functionally, ligates lysine onto the cytidine present at position 34 of the AUA codon-specific tRNA(Ile) that contains the anticodon CAU, in an ATP-dependent manner. Cytidine is converted to lysidine, thus changing the amino acid specificity of the tRNA from methionine to isoleucine. The sequence is that of tRNA(Ile)-lysidine synthase from Enterococcus faecalis (strain ATCC 700802 / V583).